Reading from the N-terminus, the 77-residue chain is Conotoxin VnMEKL-023 (77 aa).

A signal peptide spans 1-19 (MQKLTILLLVAAVLMSTQA). A propeptide spanning residues 20-37 (LIKGGGEKRPKEKIRFLS) is cleaved from the precursor. Cystine bridges form between Cys51/Cys65, Cys58/Cys69, and Cys64/Cys74.

The protein belongs to the conotoxin O2 superfamily. In terms of tissue distribution, expressed by the venom duct.

Its subcellular location is the secreted. The polypeptide is Conotoxin VnMEKL-023 (Conus ventricosus (Mediterranean cone)).